The primary structure comprises 358 residues: Feruloyl CoA ortho-hydroxylase F6H1-2 (358 aa).

The Fe2OG dioxygenase domain occupies 200-308 (TKESLLMGSK…RISVPIFVNP (109 aa)). A 2-oxoglutarate-binding site is contributed by Tyr216. Fe cation-binding residues include His231, Asp233, and His289. The 2-oxoglutarate site is built by Arg299 and Ser301.

It belongs to the iron/ascorbate-dependent oxidoreductase family. L-ascorbate is required as a cofactor. It depends on Fe(2+) as a cofactor. As to expression, expressed at low levels in tubers, underground stems, leaves and petioles.

It carries out the reaction (E)-feruloyl-CoA + 2-oxoglutarate + O2 = (E)-6-hydroxyferuloyl-CoA + succinate + CO2. Its pathway is phenylpropanoid metabolism. Its function is as follows. 2-oxoglutarate (OG)- and Fe(II)-dependent dioxygenase (2OGD) involved in scopoletin biosynthesis. Converts feruloyl CoA into 6'-hydroxyferuloyl CoA, and, at low efficiency, caffeoyl-CoA into 6'-hydroxycaffeate, but has no activity with p-coumaroyl-CoA. The sequence is that of Feruloyl CoA ortho-hydroxylase F6H1-2 from Ipomoea batatas (Sweet potato).